A 775-amino-acid chain; its full sequence is N6-adenosine-methyltransferase non-catalytic subunit MTB (775 aa).

Positions 1–10 (MKKKQEESSL) are enriched in basic and acidic residues. Disordered regions lie at residues 1-424 (MKKK…GAIP) and 520-569 (DRGG…EQND). Over residues 40–49 (FESSSRSGGS) the composition is skewed to low complexity. 5 stretches are compositionally biased toward basic and acidic residues: residues 50–79 (KSKEDNKSVVDVEHQDRDSKRERDGRERTH), 100–117 (DGDHKSSKLSDSRHDSGG), 125–222 (EHGE…LKDN), 229–278 (SSGD…RGEA), and 333–344 (EWAHNQEGRQRS). The segment covering 375-400 (QRGSTPGRTNFVQTPNRGYQTPQGTR) has biased composition (polar residues).

This sequence belongs to the MT-A70-like family. As to quaternary structure, forms homodimers. Interacts with HAKAI, MTA and VIR. Associates with MTA, FIP37, VIR and HAKAI to form the m6A writer complex which is essential for adenosine methylation at specific mRNA sequences.

The protein localises to the nucleus speckle. It localises to the nucleus. The protein resides in the nucleoplasm. Functionally, probable non-catalytic subunit of the N6-methyltransferase complex, a multiprotein complex that mediates N6-methyladenosine (m6A) methylation at the 5'-[AG]GAC-3' consensus sites of some mRNAs. Associates with MTA, FIP37, VIR and HAKAI to form the m6A writer complex which is essential for adenosine methylation at specific mRNA sequences. N6-methyladenosine (m6A) plays a role in mRNA stability, processing, translation efficiency and editing. The polypeptide is N6-adenosine-methyltransferase non-catalytic subunit MTB (Arabidopsis thaliana (Mouse-ear cress)).